The sequence spans 502 residues: Membrane-bound lytic murein transglycosylase F (502 aa).

The first 33 residues, 1–33 (MSRFISTFRSSSAQLSIVLAVILATGCSQPTTL), serve as a signal peptide directing secretion. The non-LT domain stretch occupies residues 34–264 (QEIREEGVLH…QLAERFYGHL (231 aa)). Residues 265–502 (DRLNYVGART…PELRLIPPTL (238 aa)) form an LT domain region. Residue E311 is part of the active site. The disordered stretch occupies residues 457–502 (PSASGLEDQLAWLGDNEAGPEAPAKESQPDLRADLPPELRLIPPTL). Basic and acidic residues predominate over residues 479-493 (PAKESQPDLRADLPP).

In the N-terminal section; belongs to the bacterial solute-binding protein 3 family. The protein in the C-terminal section; belongs to the transglycosylase Slt family.

It is found in the cell outer membrane. The catalysed reaction is Exolytic cleavage of the (1-&gt;4)-beta-glycosidic linkage between N-acetylmuramic acid (MurNAc) and N-acetylglucosamine (GlcNAc) residues in peptidoglycan, from either the reducing or the non-reducing ends of the peptidoglycan chains, with concomitant formation of a 1,6-anhydrobond in the MurNAc residue.. In terms of biological role, murein-degrading enzyme that degrades murein glycan strands and insoluble, high-molecular weight murein sacculi, with the concomitant formation of a 1,6-anhydromuramoyl product. Lytic transglycosylases (LTs) play an integral role in the metabolism of the peptidoglycan (PG) sacculus. Their lytic action creates space within the PG sacculus to allow for its expansion as well as for the insertion of various structures such as secretion systems and flagella. This chain is Membrane-bound lytic murein transglycosylase F, found in Marinobacter nauticus (strain ATCC 700491 / DSM 11845 / VT8) (Marinobacter aquaeolei).